The primary structure comprises 472 residues: N-succinylglutamate 5-semialdehyde dehydrogenase 1 (472 aa).

209-214 provides a ligand contact to NAD(+); the sequence is GGVQAG. Catalysis depends on residues E232 and C266.

Belongs to the aldehyde dehydrogenase family. AstD subfamily.

The enzyme catalyses N-succinyl-L-glutamate 5-semialdehyde + NAD(+) + H2O = N-succinyl-L-glutamate + NADH + 2 H(+). Its pathway is amino-acid degradation; L-arginine degradation via AST pathway; L-glutamate and succinate from L-arginine: step 4/5. In terms of biological role, catalyzes the NAD-dependent reduction of succinylglutamate semialdehyde into succinylglutamate. The protein is N-succinylglutamate 5-semialdehyde dehydrogenase 1 of Caulobacter vibrioides (strain ATCC 19089 / CIP 103742 / CB 15) (Caulobacter crescentus).